The sequence spans 155 residues: MADLTELMKNEVFMAFASYATIVLSKMMFMSTATAFYRLTRKVFANPEDCSSFGKGENAKKYLRTDERVERVRRAHLNDLENIVPFLGIGLLYSLSGPDLSTAILHFRLFVGARIYHTIAYLTPLPQPNRGLAFFLGYGVTLSMAYRLLKSRLYL.

Residues 3-9 (DLTELMK) are Lumenal-facing. Residues 10–33 (NEVFMAFASYATIVLSKMMFMSTA) form a helical membrane-spanning segment. Over 34–62 (TAFYRLTRKVFANPEDCSSFGKGENAKKY) the chain is Cytoplasmic. Arg38 is a binding site for glutathione. Lys42, Lys55, and Lys60 each carry N6-acetyllysine. A helical membrane pass occupies residues 63–96 (LRTDERVERVRRAHLNDLENIVPFLGIGLLYSLS). Residues Arg73, Arg74, His76, and Glu81 each coordinate glutathione. The Lumenal portion of the chain corresponds to 97 to 99 (GPD). Residues 100-123 (LSTAILHFRLFVGARIYHTIAYLT) traverse the membrane as a helical segment. Glutathione is bound at residue Tyr121. The Cytoplasmic portion of the chain corresponds to 124 to 128 (PLPQP). The helical transmembrane segment at 129–148 (NRGLAFFLGYGVTLSMAYRL) threads the bilayer. At 149–155 (LKSRLYL) the chain is on the lumenal side.

This sequence belongs to the MAPEG family. As to quaternary structure, homotrimer; The trimer binds only one molecule of glutathione.

The protein localises to the endoplasmic reticulum membrane. It is found in the mitochondrion outer membrane. The enzyme catalyses RX + glutathione = an S-substituted glutathione + a halide anion + H(+). Conjugation of reduced glutathione to a wide number of exogenous and endogenous hydrophobic electrophiles. This chain is Microsomal glutathione S-transferase 1 (MGST1), found in Sus scrofa (Pig).